A 349-amino-acid chain; its full sequence is Protein AMBP (349 aa).

An N-terminal signal peptide occupies residues 1–19 (MQGLGALFLLLTACLTLKA). 3-hydroxy-L-kynurenine is bound by residues Cys-52 and Lys-110. Cys-90 and Cys-187 are joined by a disulfide. N-linked (GlcNAc...) asparagine glycosylation is present at Asn-114. Positions 136 and 148 each coordinate 3-hydroxy-L-kynurenine. O-linked (Xyl...) (chondroitin sulfate) serine glycosylation occurs at Ser-214. Intrachain disulfides connect Cys-230–Cys-280, Cys-239–Cys-263, Cys-255–Cys-276, Cys-286–Cys-336, Cys-295–Cys-319, and Cys-311–Cys-332. 2 consecutive BPTI/Kunitz inhibitor domains span residues 230-280 (CQLN…LQTC) and 286-336 (CNLP…KEYC). The N-linked (GlcNAc...) asparagine glycan is linked to Asn-233.

In the N-terminal section; belongs to the calycin superfamily. Lipocalin family. Monomer. Homodimer. In plasma, it occurs as a monomer or dimer and in covalently-linked complexes with immunoglobulin A (IgA), ALB/albumin and F2/prothrombin. Chromophore-bound alpha-1-microglobulin interacts with the constant region of immunoglobulin A. Chromophore-bound alpha-1-microglobulin interacts with ALB with molar ratio 2:1 and 1:1; this interaction does not prevent fatty acid binding to ALB. Interacts with F2/prothrombin (via N-terminus) with molar ratio 2:1 and 1:1; this interaction does not prevent the activation of prothrombin to thrombin. Interacts with NDUFAB1, a subunit of mitochondrial complex I. Interacts with FN1. In terms of assembly, I-alpha-I plasma protease inhibitors are assembled from one or two heavy chains (HC) and one light chain, bikunin. Inter-alpha-inhibitor (I-alpha-I) is composed of ITIH1/HC1, ITIH2/HC2 and bikunin, and pre-alpha-inhibitor (P-alpha-I) of ITIH3/HC3 and bikunin. Interacts with TNFAIP6 (via Link domain). As to quaternary structure, monomer. Also occurs as a complex with tryptase in mast cells. Post-translationally, the precursor is proteolytically processed into separately functioning proteins. 3-hydroxykynurenine, an oxidized tryptophan metabolite that is common in biological fluids, reacts with Cys-53, Lys-111, Lys-137, and Lys-149 to form heterogeneous polycyclic chromophores including hydroxanthommatin. The reaction by alpha-1-microglobulin is autocatalytic; the human protein forms chromophore even when expressed in insect and bacterial cells. The chromophore can react with accessible cysteines forming non-reducible thioether cross-links with other molecules of alpha-1-microglobulin or with other proteins such as Ig alpha-1 chain C region 'Cys-352'. In terms of processing, heavy chains are interlinked with bikunin via a chondroitin 4-sulfate bridge to the C-terminal aspartate. Post-translationally, proteolytically cleaved by PRSS3 at Kunitz domain 2. In terms of tissue distribution, expressed by the liver and secreted in plasma.

The protein resides in the secreted. Its subcellular location is the endoplasmic reticulum. It is found in the cytoplasm. It localises to the cytosol. The protein localises to the cell membrane. The protein resides in the nucleus membrane. Its subcellular location is the mitochondrion inner membrane. It is found in the extracellular space. It localises to the extracellular matrix. Its function is as follows. Antioxidant and tissue repair protein with reductase, heme-binding and radical-scavenging activities. Removes and protects against harmful oxidants and repairs macromolecules in intravascular and extravascular spaces and in intracellular compartments. Intravascularly, plays a regulatory role in red cell homeostasis by preventing heme- and reactive oxygen species-induced cell damage. Binds and degrades free heme to protect fetal and adult red blood cells from hemolysis. Reduces extracellular methemoglobin, a Fe3+ (ferric) form of hemoglobin that cannot bind oxygen, back to the Fe2+ (ferrous) form deoxyhemoglobin, which has oxygen-carrying potential. Upon acute inflammation, inhibits oxidation of low-density lipoprotein particles by MPO and limits vascular damage. Extravascularly, protects from oxidation products formed on extracellular matrix structures and cell membranes. Catalyzes the reduction of carbonyl groups on oxidized collagen fibers and preserves cellular and extracellular matrix ultrastructures. Importantly, counteracts the oxidative damage at blood-placenta interface, preventing leakage of free fetal hemoglobin into the maternal circulation. Intracellularly, has a role in maintaining mitochondrial redox homeostasis. Bound to complex I of the respiratory chain of mitochondria, may scavenge free radicals and preserve mitochondrial ATP synthesis. Protects renal tubule epithelial cells from heme-induced oxidative damage to mitochondria. Reduces cytochrome c from Fe3+ (ferric) to the Fe2+ (ferrous) state through formation of superoxide anion radicals in the presence of ascorbate or NADH/NADPH electron donor cofactors, ascorbate being the preferred cofactor. Has a chaperone role in facilitating the correct folding of bikunin in the endoplasmic reticulum compartment. Functionally, kunitz-type serine protease inhibitor and structural component of extracellular matrix with a role in extracellular space remodeling and cell adhesion. Among others, has antiprotease activity toward kallikrein, a protease involved in airway inflammation; inhibits GZMK/granzyme, a granule-stored serine protease involved in NK and T cell cytotoxic responses; and inhibits PLG/plasmin, a protease required for activation of matrix metalloproteinases. As part of I-alpha-I complex, provides for the heavy chains to be transferred from I-alpha-I complex to hyaluronan in the presence of TNFAIP6, in a dynamic process that releases free bikunin and remodels extracellular matrix proteoglycan structures. Free bikunin, but not its heavy chain-bound form, acts as a potent protease inhibitor in airway secretions. Part of hyaluronan-rich extracellular matrix that surrounds oocyte during cumulus oophorus expansion, an indispensable process for proper ovulation. Also inhibits calcium oxalate crystallization. In terms of biological role, kunitz-type serine protease inhibitor. Has high catalytic efficiency for F10/blood coagulation factor Xa and may act as an anticoagulant by inhibiting prothrombin activation. Inhibits trypsin and mast cell CMA1/chymase and tryptase proteases. This Rattus norvegicus (Rat) protein is Protein AMBP (Ambp).